A 213-amino-acid chain; its full sequence is Probable GTP-binding protein EngB (213 aa).

Residues 30–204 (EGFEVAFAGR…YTALAGWMEL (175 aa)) form the EngB-type G domain. GTP-binding positions include 38-45 (GRSNAGKS), 64-68 (GRTQL), 82-85 (DLPG), 149-152 (TKAD), and 182-185 (LFSA). Residues Ser45 and Thr66 each coordinate Mg(2+).

It belongs to the TRAFAC class TrmE-Era-EngA-EngB-Septin-like GTPase superfamily. EngB GTPase family. Requires Mg(2+) as cofactor.

Functionally, necessary for normal cell division and for the maintenance of normal septation. This Pseudomonas fluorescens (strain SBW25) protein is Probable GTP-binding protein EngB.